A 206-amino-acid polypeptide reads, in one-letter code: Proteasome subunit beta 2 (206 aa).

Positions 1-7 (MREAVSK) are cleaved as a propeptide — removed in mature form; by autocatalysis. Catalysis depends on T8, which acts as the Nucleophile.

Belongs to the peptidase T1B family. The 20S proteasome core is composed of 14 alpha and 14 beta subunits that assemble into four stacked heptameric rings, resulting in a barrel-shaped structure. The two inner rings, each composed of seven catalytic beta subunits, are sandwiched by two outer rings, each composed of seven alpha subunits. The catalytic chamber with the active sites is on the inside of the barrel. Has a gated structure, the ends of the cylinder being occluded by the N-termini of the alpha-subunits. Is capped at one or both ends by the proteasome regulatory ATPase, PAN.

The protein localises to the cytoplasm. The catalysed reaction is Cleavage of peptide bonds with very broad specificity.. With respect to regulation, the formation of the proteasomal ATPase PAN-20S proteasome complex, via the docking of the C-termini of PAN into the intersubunit pockets in the alpha-rings, triggers opening of the gate for substrate entry. Interconversion between the open-gate and close-gate conformations leads to a dynamic regulation of the 20S proteasome proteolysis activity. Functionally, component of the proteasome core, a large protease complex with broad specificity involved in protein degradation. This Desulfurococcus amylolyticus (strain DSM 18924 / JCM 16383 / VKM B-2413 / 1221n) (Desulfurococcus kamchatkensis) protein is Proteasome subunit beta 2.